The primary structure comprises 325 residues: Lipoyl synthase (325 aa).

The disordered stretch occupies residues 1-31 (MANLIDNTARSAASDARAARHPEKQKRADTP). Residues 17–31 (RAARHPEKQKRADTP) show a composition bias toward basic and acidic residues. Cys65, Cys70, Cys76, Cys91, Cys95, Cys98, and Ser304 together coordinate [4Fe-4S] cluster. Positions 77 to 293 (WEQKHATFMI…ETIARAKGFL (217 aa)) constitute a Radical SAM core domain.

It belongs to the radical SAM superfamily. Lipoyl synthase family. It depends on [4Fe-4S] cluster as a cofactor.

Its subcellular location is the cytoplasm. It catalyses the reaction [[Fe-S] cluster scaffold protein carrying a second [4Fe-4S](2+) cluster] + N(6)-octanoyl-L-lysyl-[protein] + 2 oxidized [2Fe-2S]-[ferredoxin] + 2 S-adenosyl-L-methionine + 4 H(+) = [[Fe-S] cluster scaffold protein] + N(6)-[(R)-dihydrolipoyl]-L-lysyl-[protein] + 4 Fe(3+) + 2 hydrogen sulfide + 2 5'-deoxyadenosine + 2 L-methionine + 2 reduced [2Fe-2S]-[ferredoxin]. The protein operates within protein modification; protein lipoylation via endogenous pathway; protein N(6)-(lipoyl)lysine from octanoyl-[acyl-carrier-protein]: step 2/2. Catalyzes the radical-mediated insertion of two sulfur atoms into the C-6 and C-8 positions of the octanoyl moiety bound to the lipoyl domains of lipoate-dependent enzymes, thereby converting the octanoylated domains into lipoylated derivatives. The protein is Lipoyl synthase of Maricaulis maris (strain MCS10) (Caulobacter maris).